The primary structure comprises 395 residues: D-alanine--D-alanine ligase (395 aa).

The ATP-grasp domain maps to 172-391 (KVVLGAAGIP…YTELITRLIE (220 aa)). Position 204 to 266 (204 to 266 (DAGLTYPLFI…EQGIDGREIE (63 aa))) interacts with ATP. The Mg(2+) site is built by aspartate 345, glutamate 358, and asparagine 360.

This sequence belongs to the D-alanine--D-alanine ligase family. The cofactor is Mg(2+). Mn(2+) is required as a cofactor.

The protein resides in the cytoplasm. It catalyses the reaction 2 D-alanine + ATP = D-alanyl-D-alanine + ADP + phosphate + H(+). Its pathway is cell wall biogenesis; peptidoglycan biosynthesis. Functionally, cell wall formation. The sequence is that of D-alanine--D-alanine ligase from Bifidobacterium longum subsp. infantis (strain ATCC 15697 / DSM 20088 / JCM 1222 / NCTC 11817 / S12).